The sequence spans 426 residues: tRNA modification GTPase MnmE (426 aa).

3 residues coordinate (6S)-5-formyl-5,6,7,8-tetrahydrofolate: Arg20, Glu77, and Met117. The region spanning 213-350 (GFEVAILGAP…LLTDIEGVLS (138 aa)) is the TrmE-type G domain. Asn223 contributes to the K(+) binding site. Residues 223–228 (NAGKST), 242–248 (SDVPGTT), and 267–270 (DTAG) contribute to the GTP site. Ser227 serves as a coordination point for Mg(2+). K(+)-binding residues include Ser242, Val244, and Thr247. Thr248 is a binding site for Mg(2+). Lys426 provides a ligand contact to (6S)-5-formyl-5,6,7,8-tetrahydrofolate.

The protein belongs to the TRAFAC class TrmE-Era-EngA-EngB-Septin-like GTPase superfamily. TrmE GTPase family. As to quaternary structure, homodimer. Heterotetramer of two MnmE and two MnmG subunits. Requires K(+) as cofactor.

The protein resides in the cytoplasm. Exhibits a very high intrinsic GTPase hydrolysis rate. Involved in the addition of a carboxymethylaminomethyl (cmnm) group at the wobble position (U34) of certain tRNAs, forming tRNA-cmnm(5)s(2)U34. This is tRNA modification GTPase MnmE from Jannaschia sp. (strain CCS1).